The sequence spans 401 residues: Protein-glutamate methylesterase/protein-glutamine glutaminase (401 aa).

Positions 16–134 (RVLVIDDSAV…LAGAEEFRRD (119 aa)) constitute a Response regulatory domain. Residue aspartate 67 is modified to 4-aspartylphosphate. Residues 146–208 (PIPPVPTQRD…PQGRGTPRNT (63 aa)) are disordered. Composition is skewed to low complexity over residues 166 to 176 (AAPGAPVARSI) and 185 to 199 (SAPA…AQPP). The 196-residue stretch at 205-400 (PRNTARPEII…PGIVRRAKGG (196 aa)) folds into the CheB-type methylesterase domain. Catalysis depends on residues serine 219, histidine 246, and aspartate 342.

This sequence belongs to the CheB family. Phosphorylated by CheA. Phosphorylation of the N-terminal regulatory domain activates the methylesterase activity.

The protein localises to the cytoplasm. It catalyses the reaction [protein]-L-glutamate 5-O-methyl ester + H2O = L-glutamyl-[protein] + methanol + H(+). The enzyme catalyses L-glutaminyl-[protein] + H2O = L-glutamyl-[protein] + NH4(+). Its function is as follows. Involved in chemotaxis. Part of a chemotaxis signal transduction system that modulates chemotaxis in response to various stimuli. Catalyzes the demethylation of specific methylglutamate residues introduced into the chemoreceptors (methyl-accepting chemotaxis proteins or MCP) by CheR. Also mediates the irreversible deamidation of specific glutamine residues to glutamic acid. The chain is Protein-glutamate methylesterase/protein-glutamine glutaminase from Maricaulis maris (strain MCS10) (Caulobacter maris).